Here is a 183-residue protein sequence, read N- to C-terminus: dCTP deaminase (183 aa).

DCTP-binding positions include 106–111 (KSTYAR), 130–132 (TLE), Gln-151, Tyr-165, and Gln-175. The active-site Proton donor/acceptor is the Glu-132.

The protein belongs to the dCTP deaminase family. In terms of assembly, homotrimer.

It catalyses the reaction dCTP + H2O + H(+) = dUTP + NH4(+). It participates in pyrimidine metabolism; dUMP biosynthesis; dUMP from dCTP (dUTP route): step 1/2. Functionally, catalyzes the deamination of dCTP to dUTP. The protein is dCTP deaminase of Acidobacterium capsulatum (strain ATCC 51196 / DSM 11244 / BCRC 80197 / JCM 7670 / NBRC 15755 / NCIMB 13165 / 161).